A 56-amino-acid polypeptide reads, in one-letter code: Large ribosomal subunit protein bL33 (56 aa).

The protein belongs to the bacterial ribosomal protein bL33 family.

The chain is Large ribosomal subunit protein bL33 from Dichelobacter nodosus (strain VCS1703A).